The sequence spans 384 residues: Glucans biosynthesis protein C (384 aa).

Transmembrane regions (helical) follow at residues 17-37, 54-74, 91-111, 140-160, 173-193, 212-232, 240-260, 274-294, 311-331, and 338-358; these read AWLM…THSW, FIHA…SYML, VGIP…ILLQ, LWFL…FTWF, AISL…YAAI, FIVM…LAFI, FTTP…AYLL, TESV…FSLG, ASLF…AYIT, and LIGF…LYEI.

Belongs to the acyltransferase 3 family. OpgC subfamily.

Its subcellular location is the cell membrane. Its pathway is glycan metabolism; osmoregulated periplasmic glucan (OPG) biosynthesis. In terms of biological role, necessary for the succinyl substitution of periplasmic glucans. Could catalyze the transfer of succinyl residues from the cytoplasmic side of the membrane to the nascent glucan backbones on the periplasmic side of the membrane. This chain is Glucans biosynthesis protein C, found in Salmonella typhi.